The following is a 447-amino-acid chain: MNHSLYLVAGLGKTGLSIARYLKRNNKSFVVFDTRKEAPGLAEFQNEFPDVPIYLQQTPDEVISQVTDVITSPGLALDTPVLERARQAGASIYGDIECLAREISAPVIAITGTNGKSTVTTLVGEMAKAAGFRVAVAGNIGTPVLDMLDDEHHYDLWVLELSSFQLDLTYSLSPVVATILNVTPDHLDRHHTMEAYTQAKQRIYRGAKAVLFNREDVYTVPHQSCQADIKCISFGKDAPSMGNWGLIEQENTTYLAKGMERLLPVESILIKGVHNWMNALAACALAEAAGISMQHILNVLKTFPGLPHRCQWVREVDGVGWINDSKGTNIGATISAINGIGGSMQGKIVLIAGGQGKGADFQELAQPVSEFVRSIVLIGEDADKIESALAKVVPVVRASSLEGAVTIAKTCAKPGDVVLLSPACASLDMFRDFNHRGDVFTSSVRGL.

112 to 118 (GTNGKST) lines the ATP pocket.

It belongs to the MurCDEF family.

The protein resides in the cytoplasm. The catalysed reaction is UDP-N-acetyl-alpha-D-muramoyl-L-alanine + D-glutamate + ATP = UDP-N-acetyl-alpha-D-muramoyl-L-alanyl-D-glutamate + ADP + phosphate + H(+). It participates in cell wall biogenesis; peptidoglycan biosynthesis. Cell wall formation. Catalyzes the addition of glutamate to the nucleotide precursor UDP-N-acetylmuramoyl-L-alanine (UMA). This chain is UDP-N-acetylmuramoylalanine--D-glutamate ligase, found in Legionella pneumophila subsp. pneumophila (strain Philadelphia 1 / ATCC 33152 / DSM 7513).